The following is a 398-amino-acid chain: Argininosuccinate synthase (398 aa).

9-17 (AYSGGLDTS) contacts ATP. The L-citrulline site is built by Tyr87 and Ser92. Gly117 provides a ligand contact to ATP. Positions 119, 123, and 124 each coordinate L-aspartate. Asn123 serves as a coordination point for L-citrulline. 5 residues coordinate L-citrulline: Arg127, Ser176, Ser185, Glu261, and Tyr273.

This sequence belongs to the argininosuccinate synthase family. Type 1 subfamily. In terms of assembly, homotetramer.

The protein localises to the cytoplasm. The enzyme catalyses L-citrulline + L-aspartate + ATP = 2-(N(omega)-L-arginino)succinate + AMP + diphosphate + H(+). The protein operates within amino-acid biosynthesis; L-arginine biosynthesis; L-arginine from L-ornithine and carbamoyl phosphate: step 2/3. The chain is Argininosuccinate synthase from Clostridium tetani (strain Massachusetts / E88).